The sequence spans 429 residues: Queuine tRNA-ribosyltransferase accessory subunit 2 (429 aa).

The Zn(2+) site is built by C330, C332, C335, and H361.

This sequence belongs to the queuine tRNA-ribosyltransferase family. QTRT2 subfamily. As to quaternary structure, heterodimer of a catalytic subunit and an accessory subunit. The cofactor is Zn(2+).

It localises to the cytoplasm. Functionally, non-catalytic subunit of the queuine tRNA-ribosyltransferase (TGT) that catalyzes the base-exchange of a guanine (G) residue with queuine (Q) at position 34 (anticodon wobble position) in tRNAs with GU(N) anticodons (tRNA-Asp, -Asn, -His and -Tyr), resulting in the hypermodified nucleoside queuosine (7-(((4,5-cis-dihydroxy-2-cyclopenten-1-yl)amino)methyl)-7-deazaguanosine). The sequence is that of Queuine tRNA-ribosyltransferase accessory subunit 2 from Culex quinquefasciatus (Southern house mosquito).